The primary structure comprises 402 residues: Protein HAIKU1 (402 aa).

Disordered stretches follow at residues 1–44, 63–135, 160–266, and 346–402; these read MDRP…LQTQ, TGSP…QQPM, SSLG…LVPS, and QPLT…WNDY. Residues 24–44 show a composition bias toward polar residues; that stretch reads LHQSTFAASTSNGAAPRLQTQ. The short motif at 55–64 is the VQ element; that stretch reads FRSIVQQLTG. Over residues 76–87 the composition is skewed to polar residues; the sequence is QNNSLRPQNTRL. Residues 103–113 are compositionally biased toward pro residues; sequence VPLPSMAPPQS. A compositionally biased stretch (polar residues) spans 160-173; it reads SSLGDSGPNANQMQ. Residues 218 to 240 are compositionally biased toward low complexity; it reads MPAQSQSQSQPQPQPQPQQHMMP. Positions 257 to 266 are enriched in pro residues; the sequence is YLPPPGLVPS. A compositionally biased stretch (polar residues) spans 349-358; that stretch reads TPNFSFSQIA. The span at 371–380 shows a compositional bias: pro residues; it reads QGPPQPPPSP. Low complexity predominate over residues 381–390; the sequence is GLMFPLSPSG.

In terms of assembly, interacts with WRKY10. Interacts with MPK6.

It is found in the nucleus. In terms of biological role, modulates seed size by negatively regulating the cellularization of syncytial endosperm. May function by binding and modulating the activity of WRKY10 transcription factor. This Arabidopsis thaliana (Mouse-ear cress) protein is Protein HAIKU1.